The sequence spans 152 residues: Ribosomal RNA large subunit methyltransferase H (152 aa).

Residues Leu-69, Gly-96, and 118–123 each bind S-adenosyl-L-methionine; that span reads FGKLTF.

Belongs to the RNA methyltransferase RlmH family. In terms of assembly, homodimer.

The protein localises to the cytoplasm. The enzyme catalyses pseudouridine(1915) in 23S rRNA + S-adenosyl-L-methionine = N(3)-methylpseudouridine(1915) in 23S rRNA + S-adenosyl-L-homocysteine + H(+). Specifically methylates the pseudouridine at position 1915 (m3Psi1915) in 23S rRNA. The protein is Ribosomal RNA large subunit methyltransferase H of Mesomycoplasma hyopneumoniae (strain 232) (Mycoplasma hyopneumoniae).